The following is a 115-amino-acid chain: NADH-ubiquinone oxidoreductase chain 3 (115 aa).

Transmembrane regions (helical) follow at residues 4–24 (LITM…AFWL), 55–75 (FFLV…LLPL), and 87–107 (TMMV…YEWL).

It belongs to the complex I subunit 3 family. In terms of assembly, core subunit of respiratory chain NADH dehydrogenase (Complex I) which is composed of 45 different subunits. Interacts with TMEM186. Interacts with TMEM242.

The protein localises to the mitochondrion inner membrane. It carries out the reaction a ubiquinone + NADH + 5 H(+)(in) = a ubiquinol + NAD(+) + 4 H(+)(out). In terms of biological role, core subunit of the mitochondrial membrane respiratory chain NADH dehydrogenase (Complex I) which catalyzes electron transfer from NADH through the respiratory chain, using ubiquinone as an electron acceptor. Essential for the catalytic activity of complex I. This Notiomys edwardsii (Edwards's long-clawed mouse) protein is NADH-ubiquinone oxidoreductase chain 3.